A 119-amino-acid chain; its full sequence is MVRISKPKTFQAYLDDCHRRYSCAHCRAHLANHDDLISKSFQGSQGRAYLFNSVVNVGCGPAEERVLLTGLHAVADIHCENCKTTLGWKYEQAFESSQKYKEGKYIIELNHMIKDNGWD.

One can recognise a Yippee domain in the interval 19 to 116 (RRYSCAHCRA…IELNHMIKDN (98 aa)). Zn(2+) is bound by residues Cys-23, Cys-26, Cys-79, and Cys-82.

It belongs to the yippee family. In terms of processing, probably ubiquitinated leading to its degradation by the proteasome.

The protein localises to the nucleus. It is found in the nucleolus. Involved in proliferation and apoptosis in myeloid precursor cells. This Bos taurus (Bovine) protein is Protein yippee-like 3 (YPEL3).